An 86-amino-acid polypeptide reads, in one-letter code: YcgL domain-containing protein XCV4171 (86 aa).

A YcgL domain is found at methionine 1–cysteine 83.

This chain is YcgL domain-containing protein XCV4171, found in Xanthomonas euvesicatoria pv. vesicatoria (strain 85-10) (Xanthomonas campestris pv. vesicatoria).